Reading from the N-terminus, the 253-residue chain is Phosphate import ATP-binding protein PstB 1 (253 aa).

The region spanning L7–I248 is the ABC transporter domain. G39–S46 is a binding site for ATP.

Belongs to the ABC transporter superfamily. Phosphate importer (TC 3.A.1.7) family. In terms of assembly, the complex is composed of two ATP-binding proteins (PstB), two transmembrane proteins (PstC and PstA) and a solute-binding protein (PstS).

It is found in the cell membrane. It catalyses the reaction phosphate(out) + ATP + H2O = ADP + 2 phosphate(in) + H(+). Its function is as follows. Part of the ABC transporter complex PstSACB involved in phosphate import. Responsible for energy coupling to the transport system. In Streptococcus pyogenes serotype M2 (strain MGAS10270), this protein is Phosphate import ATP-binding protein PstB 1.